We begin with the raw amino-acid sequence, 204 residues long: Large ribosomal subunit protein uL4 (204 aa).

A disordered region spans residues glutamine 49–arginine 72.

The protein belongs to the universal ribosomal protein uL4 family. Part of the 50S ribosomal subunit.

Functionally, one of the primary rRNA binding proteins, this protein initially binds near the 5'-end of the 23S rRNA. It is important during the early stages of 50S assembly. It makes multiple contacts with different domains of the 23S rRNA in the assembled 50S subunit and ribosome. Its function is as follows. Forms part of the polypeptide exit tunnel. In Saccharophagus degradans (strain 2-40 / ATCC 43961 / DSM 17024), this protein is Large ribosomal subunit protein uL4.